Here is a 414-residue protein sequence, read N- to C-terminus: Histidinol dehydrogenase (414 aa).

Residues tyrosine 116, glutamine 177, and asparagine 200 each contribute to the NAD(+) site. 3 residues coordinate substrate: threonine 223, glutamine 245, and histidine 248. 2 residues coordinate Zn(2+): glutamine 245 and histidine 248. Catalysis depends on proton acceptor residues glutamate 313 and histidine 314. Substrate is bound by residues histidine 314, aspartate 347, glutamate 401, and histidine 406. Position 347 (aspartate 347) interacts with Zn(2+). Position 406 (histidine 406) interacts with Zn(2+).

It belongs to the histidinol dehydrogenase family. Zn(2+) is required as a cofactor.

The catalysed reaction is L-histidinol + 2 NAD(+) + H2O = L-histidine + 2 NADH + 3 H(+). It functions in the pathway amino-acid biosynthesis; L-histidine biosynthesis; L-histidine from 5-phospho-alpha-D-ribose 1-diphosphate: step 9/9. In terms of biological role, catalyzes the sequential NAD-dependent oxidations of L-histidinol to L-histidinaldehyde and then to L-histidine. This Staphylococcus epidermidis (strain ATCC 35984 / DSM 28319 / BCRC 17069 / CCUG 31568 / BM 3577 / RP62A) protein is Histidinol dehydrogenase.